We begin with the raw amino-acid sequence, 105 residues long: Flagellar transcriptional regulator FlhD (105 aa).

Belongs to the FlhD family. As to quaternary structure, homodimer; disulfide-linked. Forms a heterohexamer composed of two FlhC and four FlhD subunits. Each FlhC binds a FlhD dimer, forming a heterotrimer, and a hexamer assembles by dimerization of two heterotrimers.

It is found in the cytoplasm. Functionally, functions in complex with FlhC as a master transcriptional regulator that regulates transcription of several flagellar and non-flagellar operons by binding to their promoter region. Activates expression of class 2 flagellar genes, including fliA, which is a flagellum-specific sigma factor that turns on the class 3 genes. Also regulates genes whose products function in a variety of physiological pathways. The sequence is that of Flagellar transcriptional regulator FlhD from Ralstonia nicotianae (strain ATCC BAA-1114 / GMI1000) (Ralstonia solanacearum).